We begin with the raw amino-acid sequence, 114 residues long: Probable 4-amino-4-deoxy-L-arabinose-phosphoundecaprenol flippase subunit ArnE (114 aa).

3 helical membrane passes run Met41–Leu61, Met64–Gly84, and Pro91–Gly111.

It belongs to the ArnE family. In terms of assembly, heterodimer of ArnE and ArnF.

Its subcellular location is the cell inner membrane. It participates in bacterial outer membrane biogenesis; lipopolysaccharide biosynthesis. In terms of biological role, translocates 4-amino-4-deoxy-L-arabinose-phosphoundecaprenol (alpha-L-Ara4N-phosphoundecaprenol) from the cytoplasmic to the periplasmic side of the inner membrane. The polypeptide is Probable 4-amino-4-deoxy-L-arabinose-phosphoundecaprenol flippase subunit ArnE (Pseudomonas savastanoi pv. phaseolicola (strain 1448A / Race 6) (Pseudomonas syringae pv. phaseolicola (strain 1448A / Race 6))).